Consider the following 89-residue polypeptide: Small ribosomal subunit protein uS17 (89 aa).

The protein belongs to the universal ribosomal protein uS17 family. In terms of assembly, part of the 30S ribosomal subunit.

In terms of biological role, one of the primary rRNA binding proteins, it binds specifically to the 5'-end of 16S ribosomal RNA. The polypeptide is Small ribosomal subunit protein uS17 (Bacteroides fragilis (strain ATCC 25285 / DSM 2151 / CCUG 4856 / JCM 11019 / LMG 10263 / NCTC 9343 / Onslow / VPI 2553 / EN-2)).